The following is a 1252-amino-acid chain: MNRPLSAEAEEELEWQVASRRRKAWAKCRSSWQASETEDLSTETTTQDEDEDDEEDLPGTKLPAPAGRGNVPNEKIAIWLKDCRTPLGASLDEQSSGTPKGVLVRNGGSFEDDLSLGAEANHLHEPDAQVENCNNILAKERRLQFHQKGRSMNSTGSGKSSGTVSSVSELLELYEEDPEEILYNLGFGRDEPDIASKIPSRFFNSSSFARGIDIKVFLSAQMQRMEVENPNYALTSRFRQIEVLTTVANAFSSLYSQVSGTPLQRIGSMSSVTSTKEVADSPPPLTRSNTANRLMKTLSKLNLCVDKTEKGEGGSSPATEKGRTLSISLSEDGGGGKSDPKLQKVVKKKESSSMLATVTEEVSGSSSTVTDSVDADRLSEEADSTISHQEESEESREAHSQEKDPLRKSAVTDPDLGHDGRVSSHCELESSSELKSAQASSSEKEPCAPLTIPSIRNIMTQQKDSFEMEEVQSTEGEAPHVPATCQLSLAKSKRDHLLRTASQHSDSSGFAEDSTDCVSLNHLLVNESLQAMGSSADSCDSETTVTSLGEDHVTPTAQDQPYFNESEEESLAPLQKGRAKVEIVAEKRKADNQDFPQCVTAENAGNNESTKGPCEPGHQITETGEHPPLAATGELPREESVESDVEKGSECEFAQYTTHHILRSLASFEAQGSGMSSEKKTGFPSSVDRVNTALQRAQMKVCSMSGQRVGRSLIKSKDLLKQRYLLAKAGYPLRRSQSLPTTLLSPVRVVSSVNVRLSPGKETRCSPPSFTYKYTPEEEQDLEKQGTEHDGQSLVKSTIFIPPPSVKKEEAPQSEGTRLEECHHGRLAPCPQFAPISQSTCSLHSVHSEWQDRPLCEHMRTLSAHSVPNISGAACSAFSPFGCPYSHRHAAHPYRACSVNPPSAIEMQLRRVLHDIRSSLQNLSQYPMTRGPDLAAAPYSTQNSSVLPLYENTFQELQVVRRSLNLFRTQMMDLELAMLRQQTVVYPHMTEEDRYEVDQLQGLRNSVRMELQDLEMQLEERLLGLDEQLRAVRVPSPFRPSALPGMCGSRSVDNLSCPSPLNVMEPVTELIREQSYLKSELGLGLGDMAYEIPPGESSESVFSQATSESSSVCSSPSHTNRRSRGLPGSKPRARLVARKKIFRASVALTPTAPSRTGSVQTPPDLESSEEAGGAEEASPVVGLASHVEEEPEDLSLMPAAEEMHRNVEQDELQQVIREIKESIVGEIRREIVSGLLAAVSSSKAPGPKQDSH.

Residues 28 to 70 (CRSSWQASETEDLSTETTTQDEDEDDEEDLPGTKLPAPAGRGN) form a disordered region. The span at 36-57 (ETEDLSTETTTQDEDEDDEEDL) shows a compositional bias: acidic residues. Threonine 85 is subject to Phosphothreonine. A phosphoserine mark is found at serine 90, serine 109, serine 207, serine 268, and serine 328. 3 disordered regions span residues 306–483 (DKTE…HVPA), 552–575 (HVTP…APLQ), and 595–636 (FPQC…GELP). Residues 357 to 372 (TVTEEVSGSSSTVTDS) are compositionally biased toward low complexity. 2 stretches are compositionally biased toward basic and acidic residues: residues 395 to 407 (SREA…DPLR) and 415 to 428 (DLGH…HCEL). The span at 429–441 (ESSSELKSAQASS) shows a compositional bias: low complexity. Serine 465 bears the Phosphoserine mark. A phosphoserine mark is found at serine 643, serine 667, serine 736, serine 738, serine 745, serine 758, and serine 766. Lysine 807 participates in a covalent cross-link: Glycyl lysine isopeptide (Lys-Gly) (interchain with G-Cter in SUMO2). Residues serine 866 and serine 898 each carry the phosphoserine modification. Positions 955 to 1031 (QELQVVRRSL…LLGLDEQLRA (77 aa)) form a coiled coil. Serine 1036, serine 1051, serine 1056, serine 1059, and serine 1114 each carry phosphoserine. Disordered stretches follow at residues 1095–1131 (GESS…GSKP) and 1147–1180 (ALTP…ASPV). Over residues 1103–1117 (SQATSESSSVCSSPS) the composition is skewed to low complexity. Phosphothreonine is present on threonine 1149. The segment covering 1151–1161 (TAPSRTGSVQT) has biased composition (polar residues). At serine 1154 the chain carries Phosphoserine. Position 1161 is a phosphothreonine (threonine 1161).

Its subcellular location is the cytoplasm. The sequence is that of Protein ITPRID2 (Itprid2) from Mus musculus (Mouse).